A 348-amino-acid chain; its full sequence is S-adenosylmethionine:tRNA ribosyltransferase-isomerase (348 aa).

This sequence belongs to the QueA family. Monomer.

Its subcellular location is the cytoplasm. The enzyme catalyses 7-aminomethyl-7-carbaguanosine(34) in tRNA + S-adenosyl-L-methionine = epoxyqueuosine(34) in tRNA + adenine + L-methionine + 2 H(+). Its pathway is tRNA modification; tRNA-queuosine biosynthesis. Transfers and isomerizes the ribose moiety from AdoMet to the 7-aminomethyl group of 7-deazaguanine (preQ1-tRNA) to give epoxyqueuosine (oQ-tRNA). In Polynucleobacter necessarius subsp. necessarius (strain STIR1), this protein is S-adenosylmethionine:tRNA ribosyltransferase-isomerase.